We begin with the raw amino-acid sequence, 475 residues long: UDP-glycosyltransferase 1 (475 aa).

His15 functions as the Proton acceptor in the catalytic mechanism. Residue His15 coordinates an anthocyanidin. The Charge relay role is filled by Asp117. Positions 345, 347, 362, 365, 366, 367, and 370 each coordinate UDP-alpha-D-glucose. Gly385 serves as a coordination point for an anthocyanidin. The UDP-alpha-D-glucose site is built by Glu386 and Gln387.

Belongs to the UDP-glycosyltransferase family. As to expression, mostly expressed in leaves and flowers, and, to a lower extent, in roots and stems.

The enzyme catalyses (20S)-protopanaxadiol + UDP-alpha-D-glucose = (20S)-ginsenoside C-K + UDP + H(+). It catalyses the reaction (20S)-ginsenoside Rg3 + UDP-alpha-D-glucose = (20S)-ginsenoside Rd + UDP + H(+). The catalysed reaction is (20S)-ginsenoside Rh2 + UDP-alpha-D-glucose = (20S)-ginsenoside F2 + UDP + H(+). It carries out the reaction (20S)-protopanaxatriol + UDP-alpha-D-glucose = (20S)-ginsenoside F1 + UDP + H(+). The enzyme catalyses dammarenediol-II + UDP-alpha-D-glucose = (20S)-20-O-(beta-D-glucosyl)-3-hydroxydammarene + UDP + H(+). It participates in secondary metabolite biosynthesis; terpenoid biosynthesis. In terms of biological role, component of the dammarane-type triterpene saponins (e.g. ginsenosides or panaxosides) biosynthetic pathway. Glycosyltransferase that catalyzes the biosynthesis of ginsenoside F1 from protopanaxatriol (PPT). Triggers C20-OH glycosylation of ginsenoside Rg3 to produce ginsenoside Rd. Mediates the conversion of protopanaxadiol (PPD) to the ginsenoside compound K. catalyzes the production of 20S-O-beta-(D-glucosyl)-dammarenediol II form dammarenediol II (DM). This is UDP-glycosyltransferase 1 from Panax ginseng (Korean ginseng).